We begin with the raw amino-acid sequence, 367 residues long: tRNA/tmRNA (uracil-C(5))-methyltransferase (367 aa).

Gln-191, Tyr-218, Asn-223, Glu-239, and Asp-299 together coordinate S-adenosyl-L-methionine. Cys-324 acts as the Nucleophile in catalysis. Glu-358 acts as the Proton acceptor in catalysis.

The protein belongs to the class I-like SAM-binding methyltransferase superfamily. RNA M5U methyltransferase family. TrmA subfamily.

The catalysed reaction is uridine(54) in tRNA + S-adenosyl-L-methionine = 5-methyluridine(54) in tRNA + S-adenosyl-L-homocysteine + H(+). The enzyme catalyses uridine(341) in tmRNA + S-adenosyl-L-methionine = 5-methyluridine(341) in tmRNA + S-adenosyl-L-homocysteine + H(+). Its function is as follows. Dual-specificity methyltransferase that catalyzes the formation of 5-methyluridine at position 54 (m5U54) in all tRNAs, and that of position 341 (m5U341) in tmRNA (transfer-mRNA). The sequence is that of tRNA/tmRNA (uracil-C(5))-methyltransferase from Campylobacter concisus (strain 13826).